Reading from the N-terminus, the 644-residue chain is Exoribonuclease 2 (644 aa).

One can recognise an RNB domain in the interval Arg189–Lys516. The S1 motif domain occupies Asp561–Val643.

Belongs to the RNR ribonuclease family. RNase II subfamily.

It is found in the cytoplasm. The catalysed reaction is Exonucleolytic cleavage in the 3'- to 5'-direction to yield nucleoside 5'-phosphates.. Its function is as follows. Involved in mRNA degradation. Hydrolyzes single-stranded polyribonucleotides processively in the 3' to 5' direction. This Cronobacter sakazakii (strain ATCC BAA-894) (Enterobacter sakazakii) protein is Exoribonuclease 2.